A 676-amino-acid chain; its full sequence is Head-specific guanylate cyclase (676 aa).

In terms of domain architecture, Guanylate cyclase spans T466–E593.

It belongs to the adenylyl cyclase class-4/guanylyl cyclase family. Heterodimer. In terms of tissue distribution, head, where it is preferentially expressed in the CNS and the retina. Not found in bodies.

It is found in the cytoplasm. The enzyme catalyses GTP = 3',5'-cyclic GMP + diphosphate. Its function is as follows. May have a role in phototransduction. Catalyzes the conversion of GTP to cGMP, a common second messenger that is utilized in a wide variety of cells and signal transduction pathways. A second subunit is required for enzyme activity. The polypeptide is Head-specific guanylate cyclase (Gycalpha99B) (Drosophila melanogaster (Fruit fly)).